A 272-amino-acid polypeptide reads, in one-letter code: 5'-AMP-activated protein kinase subunit beta-2 (272 aa).

The segment at 1-52 is disordered; the sequence is MGNTTSDRVSGERHGAKAARSEGAGGHAPGKEHKIMVGSTDDPSVFSLPDSK. Position 39 is a phosphoserine (Ser-39). Thr-40 carries the post-translational modification Phosphothreonine. Ser-69 carries the post-translational modification Phosphoserine; by ULK1. Phosphoserine is present on residues Ser-95 and Ser-108. Residue Thr-148 is modified to Phosphothreonine. 4 positions are modified to phosphoserine: Ser-158, Ser-170, Ser-174, and Ser-184.

It belongs to the 5'-AMP-activated protein kinase beta subunit family. AMPK is a heterotrimer of an alpha catalytic subunit (PRKAA1 or PRKAA2), a beta (PRKAB1 or PRKAB2) and a gamma non-catalytic subunits (PRKAG1, PRKAG2 or PRKAG3). Phosphorylated when associated with the catalytic subunit (PRKAA1 or PRKAA2). Phosphorylated by ULK1 and ULK2; leading to negatively regulate AMPK activity and suggesting the existence of a regulatory feedback loop between ULK1, ULK2 and AMPK.

In terms of biological role, non-catalytic subunit of AMP-activated protein kinase (AMPK), an energy sensor protein kinase that plays a key role in regulating cellular energy metabolism. In response to reduction of intracellular ATP levels, AMPK activates energy-producing pathways and inhibits energy-consuming processes: inhibits protein, carbohydrate and lipid biosynthesis, as well as cell growth and proliferation. AMPK acts via direct phosphorylation of metabolic enzymes, and by longer-term effects via phosphorylation of transcription regulators. Also acts as a regulator of cellular polarity by remodeling the actin cytoskeleton; probably by indirectly activating myosin. Beta non-catalytic subunit acts as a scaffold on which the AMPK complex assembles, via its C-terminus that bridges alpha (PRKAA1 or PRKAA2) and gamma subunits (PRKAG1, PRKAG2 or PRKAG3). The sequence is that of 5'-AMP-activated protein kinase subunit beta-2 (PRKAB2) from Homo sapiens (Human).